Here is a 158-residue protein sequence, read N- to C-terminus: Deoxyuridine 5'-triphosphate nucleotidohydrolase (158 aa).

Residues 75-77 (RSG), N88, 92-94 (TVD), and K102 each bind substrate.

It belongs to the dUTPase family. Requires Mg(2+) as cofactor.

It carries out the reaction dUTP + H2O = dUMP + diphosphate + H(+). Its pathway is pyrimidine metabolism; dUMP biosynthesis; dUMP from dCTP (dUTP route): step 2/2. Functionally, this enzyme is involved in nucleotide metabolism: it produces dUMP, the immediate precursor of thymidine nucleotides and it decreases the intracellular concentration of dUTP so that uracil cannot be incorporated into DNA. The sequence is that of Deoxyuridine 5'-triphosphate nucleotidohydrolase from Bifidobacterium longum (strain DJO10A).